A 418-amino-acid polypeptide reads, in one-letter code: Putative ion-transport protein YfeO (418 aa).

The next 12 helical transmembrane spans lie at 10–30 (LLLS…LIVV), 54–74 (DSPF…GLVI), 99–119 (ALPG…SLGP), 120–140 (EHPI…RLLP), 149–169 (ILAS…AALI), 186–206 (LFAP…FFHP), 223–243 (ILSG…AVWC), 258–278 (VLML…AGPV), 300–320 (DYFL…ASGF), 322–342 (GGRI…LHEH), 343–363 (VPAV…VLVV), and 371–391 (LFMA…CIVM).

This sequence belongs to the chloride channel (TC 2.A.49) family.

Its subcellular location is the cell membrane. In Escherichia coli (strain SMS-3-5 / SECEC), this protein is Putative ion-transport protein YfeO.